The sequence spans 714 residues: Probable metal-nicotianamine transporter YSL5 (714 aa).

The segment at 17-44 is disordered; that stretch reads HELQETGFSPETEKVKNKNFEEDEEEED. Positions 27–36 are enriched in basic and acidic residues; that stretch reads ETEKVKNKNF. 13 helical membrane passes run 67–87, 90–110, 135–155, 175–195, 236–256, 295–315, 340–360, 413–433, 445–465, 477–497, 531–551, 593–613, and 631–651; these read AFVVSFMLSILFSFIVMKLNL, GIIPSLNVSAGLLGFFFVKTW, CVVASSGIAFSGGFGTYLFGM, LGWIIGFLFVVSFLGLFSVVP, VLGKFFSLSFFWSFFQWFFTG, IINISVLLGGILSWGIMWPLI, VFIAVAIILGDGLYNFCKVLS, IPTWFAVGGYITIAATSTAIL, ILVIYICAPVLAFCNAYGAGL, LAIFTIGAWAGSEHGGMLAGL, FVSQVIGTAMGCVVSPCVFWL, LVLCYAFFGVAILVNIVKDSL, and FFLGPYFAIDMCVGSLILFIW.

Belongs to the YSL (TC 2.A.67.2) family.

The protein resides in the membrane. May be involved in the transport of nicotianamine-chelated metals. This Arabidopsis thaliana (Mouse-ear cress) protein is Probable metal-nicotianamine transporter YSL5 (YSL5).